Consider the following 717-residue polypeptide: P-loop NTPase domain-containing protein LPA1 homolog 2 (717 aa).

Disordered regions lie at residues 235 to 259 (KKLK…SSTT) and 532 to 629 (HYSS…DTIS). Polar residues-rich tracts occupy residues 243–259 (VNSN…SSTT) and 532–545 (HYSS…TSDG). The segment covering 559–582 (SDEDDEEGDDDFHEPDSDEDLSDN) has biased composition (acidic residues). A compositionally biased stretch (basic and acidic residues) spans 583–602 (NDERNRDEIGSVDEESTKSD).

In terms of biological role, may be not required for the accumulation of phytic acid in seeds. Phytic acid is the primary storage form of phosphorus in cereal grains and other plant seeds. This is P-loop NTPase domain-containing protein LPA1 homolog 2 from Arabidopsis thaliana (Mouse-ear cress).